We begin with the raw amino-acid sequence, 313 residues long: MTLQQIKEIYSRPLTELILQALEIHNKNFGNDIELCSLKSIKTGTCPEDCKYCPQSGHYNTSIEKHKLLDKDSILAEAKNAKDAGSKRFCMGAAWKHIPKKDFDQVAEIITEVKNLGLETCVTLGSINADEATKLKQAGLDYYNHNLDTSREFYPEIITTRKFEERIETIRNVANADINVCCGGILGMGESLDDRFNLLLELLQLPAAPKSIPINTLIPVKGTPLGDKYTNAQIDSFELVKFIATTRILFPQARLRLSAGRENMSLETQTLCFLAGINSIFYGNKLLTENNATVNSDNFLLAKLGLKSNAELC.

A Radical SAM core domain is found at 28 to 258; that stretch reads NFGNDIELCS…LFPQARLRLS (231 aa). [4Fe-4S] cluster is bound by residues Cys46, Cys50, and Cys53. [2Fe-2S] cluster is bound by residues Cys90, Cys121, Cys181, and Arg256.

It belongs to the radical SAM superfamily. Biotin synthase family. In terms of assembly, homodimer. Requires [4Fe-4S] cluster as cofactor. It depends on [2Fe-2S] cluster as a cofactor.

The catalysed reaction is (4R,5S)-dethiobiotin + (sulfur carrier)-SH + 2 reduced [2Fe-2S]-[ferredoxin] + 2 S-adenosyl-L-methionine = (sulfur carrier)-H + biotin + 2 5'-deoxyadenosine + 2 L-methionine + 2 oxidized [2Fe-2S]-[ferredoxin]. It participates in cofactor biosynthesis; biotin biosynthesis; biotin from 7,8-diaminononanoate: step 2/2. Functionally, catalyzes the conversion of dethiobiotin (DTB) to biotin by the insertion of a sulfur atom into dethiobiotin via a radical-based mechanism. This is Biotin synthase from Francisella tularensis subsp. mediasiatica (strain FSC147).